Here is a 288-residue protein sequence, read N- to C-terminus: Elongation factor Ts (288 aa).

The segment at 82–85 (TDFV) is involved in Mg(2+) ion dislocation from EF-Tu.

Belongs to the EF-Ts family.

It localises to the cytoplasm. Associates with the EF-Tu.GDP complex and induces the exchange of GDP to GTP. It remains bound to the aminoacyl-tRNA.EF-Tu.GTP complex up to the GTP hydrolysis stage on the ribosome. The polypeptide is Elongation factor Ts (Prosthecochloris aestuarii (strain DSM 271 / SK 413)).